A 333-amino-acid polypeptide reads, in one-letter code: Lipoyl synthase (333 aa).

The span at 1–15 shows a compositional bias: polar residues; sequence MSTLVESPVPSNDSQ. Residues 1–34 are disordered; the sequence is MSTLVESPVPSNDSQAAAPAAYDPTQKQKSQAKT. Residues C80, C85, C91, C106, C110, C113, and S320 each contribute to the [4Fe-4S] cluster site. Residues 91 to 309 form the Radical SAM core domain; that stretch reads CFGKGTATFM…EREAYAMGFT (219 aa).

It belongs to the radical SAM superfamily. Lipoyl synthase family. The cofactor is [4Fe-4S] cluster.

The protein resides in the cytoplasm. The enzyme catalyses [[Fe-S] cluster scaffold protein carrying a second [4Fe-4S](2+) cluster] + N(6)-octanoyl-L-lysyl-[protein] + 2 oxidized [2Fe-2S]-[ferredoxin] + 2 S-adenosyl-L-methionine + 4 H(+) = [[Fe-S] cluster scaffold protein] + N(6)-[(R)-dihydrolipoyl]-L-lysyl-[protein] + 4 Fe(3+) + 2 hydrogen sulfide + 2 5'-deoxyadenosine + 2 L-methionine + 2 reduced [2Fe-2S]-[ferredoxin]. The protein operates within protein modification; protein lipoylation via endogenous pathway; protein N(6)-(lipoyl)lysine from octanoyl-[acyl-carrier-protein]: step 2/2. In terms of biological role, catalyzes the radical-mediated insertion of two sulfur atoms into the C-6 and C-8 positions of the octanoyl moiety bound to the lipoyl domains of lipoate-dependent enzymes, thereby converting the octanoylated domains into lipoylated derivatives. The protein is Lipoyl synthase of Bordetella parapertussis (strain 12822 / ATCC BAA-587 / NCTC 13253).